A 942-amino-acid polypeptide reads, in one-letter code: Isoleucine--tRNA ligase (942 aa).

The short motif at 58–68 (PYVNGSIHLGH) is the 'HIGH' region element. Residue glutamate 564 participates in L-isoleucyl-5'-AMP binding. Positions 605–609 (KMSKS) match the 'KMSKS' region motif. Lysine 608 contributes to the ATP binding site. Residues cysteine 905, cysteine 908, cysteine 925, and cysteine 928 each contribute to the Zn(2+) site.

It belongs to the class-I aminoacyl-tRNA synthetase family. IleS type 1 subfamily. In terms of assembly, monomer. Requires Zn(2+) as cofactor.

The protein resides in the cytoplasm. The enzyme catalyses tRNA(Ile) + L-isoleucine + ATP = L-isoleucyl-tRNA(Ile) + AMP + diphosphate. Functionally, catalyzes the attachment of isoleucine to tRNA(Ile). As IleRS can inadvertently accommodate and process structurally similar amino acids such as valine, to avoid such errors it has two additional distinct tRNA(Ile)-dependent editing activities. One activity is designated as 'pretransfer' editing and involves the hydrolysis of activated Val-AMP. The other activity is designated 'posttransfer' editing and involves deacylation of mischarged Val-tRNA(Ile). The sequence is that of Isoleucine--tRNA ligase from Blochmanniella pennsylvanica (strain BPEN).